Here is a 929-residue protein sequence, read N- to C-terminus: ATP-dependent DNA helicase PIF1 (929 aa).

The transit peptide at 1–52 (MLRRLLQPAYNVALSGTSASTLPRKSASVGLVRTALMPVDYNAGALFCAMRF) directs the protein to the mitochondrion. Positions 55 to 89 (GTEKERKREPKRGSKRRSKATTTLSTPTDAQTSVT) are disordered. Positions 56–66 (TEKERKREPKR) are enriched in basic and acidic residues. Over residues 74–89 (ATTTLSTPTDAQTSVT) the composition is skewed to polar residues. 302–309 (GSAGTGKT) serves as a coordination point for ATP. The DNA-binding element occupies 776–796 (HLLYVAMSRVRNPEQLSMSSF). Positions 902–929 (HERRQKKMAVEGAKQTDTTKASSGESLE) are disordered. The span at 916-929 (QTDTTKASSGESLE) shows a compositional bias: polar residues.

Belongs to the helicase family. PIF1 subfamily. Monomer. Mg(2+) serves as cofactor.

It localises to the mitochondrion. The enzyme catalyses Couples ATP hydrolysis with the unwinding of duplex DNA at the replication fork by translocating in the 5'-3' direction. This creates two antiparallel DNA single strands (ssDNA). The leading ssDNA polymer is the template for DNA polymerase III holoenzyme which synthesizes a continuous strand.. The catalysed reaction is ATP + H2O = ADP + phosphate + H(+). In terms of biological role, DNA-dependent ATPase and probable 5'-3' DNA helicase required for the maintenance of mitochondrial (kinetoplast) genome stability. Essential for replication of kinetoplast minicircles. Involved in the segregation of minicircle progeny. In Trypanosoma brucei brucei (strain 927/4 GUTat10.1), this protein is ATP-dependent DNA helicase PIF1.